A 227-amino-acid polypeptide reads, in one-letter code: Cytochrome c oxidase subunit 2 (227 aa).

Over methionine 1 to serine 14 the chain is Mitochondrial intermembrane. The chain crosses the membrane as a helical span at residues proline 15–methionine 45. Residues leucine 46–glutamine 59 are Mitochondrial matrix-facing. Residues glutamate 60 to methionine 87 traverse the membrane as a helical segment. Topologically, residues aspartate 88–leucine 227 are mitochondrial intermembrane. Positions 161, 196, 198, 200, 204, and 207 each coordinate Cu cation. A Mg(2+)-binding site is contributed by glutamate 198.

Belongs to the cytochrome c oxidase subunit 2 family. Component of the cytochrome c oxidase (complex IV, CIV), a multisubunit enzyme composed of 14 subunits. The complex is composed of a catalytic core of 3 subunits MT-CO1, MT-CO2 and MT-CO3, encoded in the mitochondrial DNA, and 11 supernumerary subunits COX4I, COX5A, COX5B, COX6A, COX6B, COX6C, COX7A, COX7B, COX7C, COX8 and NDUFA4, which are encoded in the nuclear genome. The complex exists as a monomer or a dimer and forms supercomplexes (SCs) in the inner mitochondrial membrane with NADH-ubiquinone oxidoreductase (complex I, CI) and ubiquinol-cytochrome c oxidoreductase (cytochrome b-c1 complex, complex III, CIII), resulting in different assemblies (supercomplex SCI(1)III(2)IV(1) and megacomplex MCI(2)III(2)IV(2)). Found in a complex with TMEM177, COA6, COX18, COX20, SCO1 and SCO2. Interacts with TMEM177 in a COX20-dependent manner. Interacts with COX20. Interacts with COX16. Requires Cu cation as cofactor.

It localises to the mitochondrion inner membrane. It carries out the reaction 4 Fe(II)-[cytochrome c] + O2 + 8 H(+)(in) = 4 Fe(III)-[cytochrome c] + 2 H2O + 4 H(+)(out). Functionally, component of the cytochrome c oxidase, the last enzyme in the mitochondrial electron transport chain which drives oxidative phosphorylation. The respiratory chain contains 3 multisubunit complexes succinate dehydrogenase (complex II, CII), ubiquinol-cytochrome c oxidoreductase (cytochrome b-c1 complex, complex III, CIII) and cytochrome c oxidase (complex IV, CIV), that cooperate to transfer electrons derived from NADH and succinate to molecular oxygen, creating an electrochemical gradient over the inner membrane that drives transmembrane transport and the ATP synthase. Cytochrome c oxidase is the component of the respiratory chain that catalyzes the reduction of oxygen to water. Electrons originating from reduced cytochrome c in the intermembrane space (IMS) are transferred via the dinuclear copper A center (CU(A)) of subunit 2 and heme A of subunit 1 to the active site in subunit 1, a binuclear center (BNC) formed by heme A3 and copper B (CU(B)). The BNC reduces molecular oxygen to 2 water molecules using 4 electrons from cytochrome c in the IMS and 4 protons from the mitochondrial matrix. This is Cytochrome c oxidase subunit 2 (MT-CO2) from Rhinoceros unicornis (Greater Indian rhinoceros).